A 432-amino-acid polypeptide reads, in one-letter code: Gamma-glutamyl phosphate reductase (432 aa).

This sequence belongs to the gamma-glutamyl phosphate reductase family.

Its subcellular location is the cytoplasm. It catalyses the reaction L-glutamate 5-semialdehyde + phosphate + NADP(+) = L-glutamyl 5-phosphate + NADPH + H(+). The protein operates within amino-acid biosynthesis; L-proline biosynthesis; L-glutamate 5-semialdehyde from L-glutamate: step 2/2. Catalyzes the NADPH-dependent reduction of L-glutamate 5-phosphate into L-glutamate 5-semialdehyde and phosphate. The product spontaneously undergoes cyclization to form 1-pyrroline-5-carboxylate. The protein is Gamma-glutamyl phosphate reductase of Brachyspira hyodysenteriae (strain ATCC 49526 / WA1).